Here is a 1331-residue protein sequence, read N- to C-terminus: DNA-directed RNA polymerase subunit beta' (1331 aa).

Zn(2+) contacts are provided by C220, C293, C300, and C303. 2 disordered regions span residues 1236-1257 (DFVD…TNDN) and 1294-1331 (ISGD…MKDQ). Residues 1243–1257 (SRSPNGYSNVVTNDN) show a composition bias toward polar residues.

It belongs to the RNA polymerase beta' chain family. RpoC2 subfamily. In terms of assembly, in cyanobacteria the RNAP catalytic core is composed of 2 alpha, 1 beta, 1 beta', 1 gamma and 1 omega subunit. When a sigma factor is associated with the core the holoenzyme is formed, which can initiate transcription. It depends on Zn(2+) as a cofactor.

It carries out the reaction RNA(n) + a ribonucleoside 5'-triphosphate = RNA(n+1) + diphosphate. Functionally, DNA-dependent RNA polymerase catalyzes the transcription of DNA into RNA using the four ribonucleoside triphosphates as substrates. This Picosynechococcus sp. (strain ATCC 27264 / PCC 7002 / PR-6) (Agmenellum quadruplicatum) protein is DNA-directed RNA polymerase subunit beta'.